Consider the following 959-residue polypeptide: Nucleoporin NUP100/NSP100 (959 aa).

The disordered stretch occupies residues 1–104 (MFGNNRPMFG…NSSNASNGNT (104 aa)). FG repeat units follow at residues 2-3 (FG), 9-10 (FG), and Gly-17. A compositionally biased stretch (polar residues) spans 12-36 (SNLSFGSNTSSFGGQQSQQPNSLFG). One copy of the SLFG 1; approximate repeat lies at 21–24 (SSFG). One copy of the SLFG 2 repeat lies at 33–36 (SLFG). Residues 37 to 48 (NSNNNNNSTSNN) are compositionally biased toward low complexity. Residues 51–54 (SGFG) form an SLFG 3; approximate repeat. 2 stretches are compositionally biased toward low complexity: residues 56–81 (FTSAAGSNSNSLFGNNNTQNNGAFGQ) and 92–104 (GSLNSSNASNGNT). The SLFG 4 repeat unit spans residues 66–69 (SLFG). One copy of the GLFG 1; approximate repeat lies at 77 to 80 (GAFG). Residues 89–92 (SPFG) form an SLFG 5; approximate repeat. The stretch at 105-106 (FG) is one FG 4 repeat. The stretch at 112–115 (GSFG) is one GLFG 2; approximate repeat. Over residues 121-136 (AFNNNSNSTNSPFGFN) the composition is skewed to low complexity. The segment at 121-172 (AFNNNSNSTNSPFGFNKPNTGGTLFGSQNNNSAGTSSLFGGQSTSTTGTFGN) is disordered. Residues 131-134 (SPFG) form an SLFG 6; approximate repeat. Residues 137–153 (KPNTGGTLFGSQNNNSA) show a composition bias toward polar residues. Residues 145 to 146 (FG) form an FG 5 repeat. Low complexity predominate over residues 154 to 172 (GTSSLFGGQSTSTTGTFGN). The stretch at 157–160 (SLFG) is one SLFG 7 repeat. One copy of the GLFG 3; approximate repeat lies at 168–171 (GTFG). The stretch at 175–178 (SSFG) is one SLFG 8; approximate repeat. Residues 189-190 (FG) form an FG 6 repeat. The tract at residues 190 to 394 (GAGNNSQSNT…NNQQQQSTGL (205 aa)) is disordered. A compositionally biased stretch (polar residues) spans 192-245 (GNNSQSNTTGSLFGNQQSSAFGTNNQQGSLFGQQSQNTNNAFGNQNQLGGSSFG). An SLFG 9 repeat occupies 202-205 (SLFG). The stretch at 210-213 (SAFG) is one SLFG 10; approximate repeat. The SLFG 11 repeat unit spans residues 220–223 (SLFG). One copy of the FG 7 repeat lies at 233 to 234 (FG). The SLFG 12; approximate repeat unit spans residues 242 to 245 (SSFG). One copy of the SLFG 13 repeat lies at 253–256 (SLFG). Residues 259–293 (NNTLGNTTNNRNGLFGQMNSSNQGSSNSGLFGQNS) are compositionally biased toward low complexity. GLFG repeat units lie at residues 271–274 (GLFG) and 287–290 (GLFG). Polar residues predominate over residues 294–303 (MNSSTQGVFG). The stretch at 300 to 303 (GVFG) is one GLFG 6; approximate repeat. The span at 304 to 317 (QNNNQMQINGNNNN) shows a compositional bias: low complexity. Residues 318–321 (SLFG) form an SLFG 14 repeat. 5 GLFG repeats span residues 333 to 336 (GLFG), 345 to 348 (GLFG), 358 to 361 (GLFG), 379 to 382 (GLFG), and 393 to 396 (GLFG). Positions 336 to 352 (GQNNQQQGSGLFGQNSQ) are enriched in low complexity. Residues 353–377 (TSGSSGLFGQNNQKQPNTFTQSNTG) are compositionally biased toward polar residues. SLFG repeat units follow at residues 405-408 (SLFG), 417-420 (SLFG), and 436-439 (SLFG). One copy of the FG 8 repeat lies at 448 to 449 (FG). The stretch at 462-465 (SLFG) is one SLFG 18 repeat. The stretch at 474 to 477 (SLFG) is one SLFG 19; approximate repeat. GLFG repeat units lie at residues 490–493 (GLFG), 506–509 (GLFG), and 523–526 (GLFG). The FG 9 repeat unit spans residues 542–543 (FG). The stretch at 550-553 (GLFG) is one GLFG 15 repeat. Residues 569-570 (FG) form an FG 10 repeat. Disordered stretches follow at residues 672 to 697 (TLERSDRGSSTSNSITDPESSYLNSN) and 745 to 794 (DDQA…PMIE). The segment covering 679–697 (GSSTSNSITDPESSYLNSN) has biased composition (polar residues). Basic and acidic residues predominate over residues 757 to 775 (LTEKAHSPQTDLKDDHDES). Ser-763 and Ser-783 each carry phosphoserine. Residues 777–790 (PDPQSKSPNGSTSI) are compositionally biased toward polar residues. A Peptidase S59 domain is found at 814–956 (KNNYYISPSI…GTYSYTIDHP (143 aa)). Residues 816–955 (NYYISPSIET…TGTYSYTIDH (140 aa)) are nucleoporin RNA-binding motif (NRM).

It belongs to the nucleoporin GLFG family. In terms of assembly, component of the nuclear pore complex (NPC). NPC constitutes the exclusive means of nucleocytoplasmic transport. NPCs allow the passive diffusion of ions and small molecules and the active, nuclear transport receptor-mediated bidirectional transport of macromolecules such as proteins, RNAs, ribonucleoparticles (RNPs), and ribosomal subunits across the nuclear envelope. Due to its 8-fold rotational symmetry, all subunits are present with 8 copies or multiples thereof. Through its FG repeats NUP100 interacts with numerous karyopherins including KAP95, and MEX67.

It localises to the nucleus. It is found in the nuclear pore complex. The protein localises to the nucleus membrane. Functionally, functions as a component of the nuclear pore complex (NPC). NPC components, collectively referred to as nucleoporins (NUPs), can play the role of both NPC structural components and of docking or interaction partners for transiently associated nuclear transport factors. Active directional transport is assured by both, a Phe-Gly (FG) repeat affinity gradient for these transport factors across the NPC and a transport cofactor concentration gradient across the nuclear envelope (GSP1 and GSP2 GTPases associated predominantly with GTP in the nucleus, with GDP in the cytoplasm). NUP100 plays an important role in several nuclear export and import pathways including poly(A)+ RNA and protein transport. This is Nucleoporin NUP100/NSP100 (NUP100) from Saccharomyces cerevisiae (strain ATCC 204508 / S288c) (Baker's yeast).